A 334-amino-acid polypeptide reads, in one-letter code: Gap junction alpha-2 protein (334 aa).

Topologically, residues 1 to 12 are cytoplasmic; sequence MAGWELLKLLLD. Residues 13 to 35 form a helical membrane-spanning segment; that stretch reads DVQEHSTLIGKVWLTVLFIFRIF. Residues 36 to 75 lie on the Extracellular side of the membrane; sequence ILSVAGESVWTDEQSDFICNTQQPGCTNVCYDQAFPISHV. Residues 76 to 98 form a helical membrane-spanning segment; that stretch reads RYWVLQFLFVSTPTLIYLGHMVY. Residues 99-153 are Cytoplasmic-facing; the sequence is LSKKEEKERQKENESRILVANEAQTEVHSSATKKIRIQGPLMCTYTTSVVFKSIF. A helical transmembrane segment spans residues 154–176; sequence EAGFLLGQWYIYGFVMSPIFVCE. Topologically, residues 177 to 207 are extracellular; sequence RIPCKHKVECFVSRPMEKTIFIIFMLVVSLI. Residues 208–230 form a helical membrane-spanning segment; sequence SLLLNLMELIHLSFKCFQHGIKE. Topologically, residues 231–334 are cytoplasmic; it reads GATCSPTGIP…HQTSSKQQYV (104 aa).

Belongs to the connexin family. Alpha-type (group II) subfamily. In terms of assembly, a connexon is composed of a hexamer of connexins. Resides primarily in the ovary, oocytes and early embryos.

It is found in the cell membrane. The protein resides in the cell junction. It localises to the gap junction. Its function is as follows. One gap junction consists of a cluster of closely packed pairs of transmembrane channels, the connexons, through which materials of low MW diffuse from one cell to a neighboring cell. This Xenopus laevis (African clawed frog) protein is Gap junction alpha-2 protein (gja2).